Here is an 87-residue protein sequence, read N- to C-terminus: Putative RNase MJ1548 (87 aa).

Residues arginine 65 and histidine 70 contribute to the active site. An RX(4)HXY motif motif is present at residues 65 to 72 (RNAIVHKY). The residue at position 72 (tyrosine 72) is an O-di-AMP-tyrosine.

This sequence belongs to the HepT RNase toxin family. As to quaternary structure, homodimer, probably forms a complex with cognate antitoxin MJ1547. In terms of processing, modified by cognate antitoxin MJ1547; probably at least 2 successive AMPylation events occur on Tyr-72.

In terms of biological role, probable toxic component of a putative type VII toxin-antitoxin (TA) system, probably an RNase. Probably neutralized by cognate antitoxin MJ1547. Neutralization may be due to AMPylation by antitoxin MJ1547. The chain is Putative RNase MJ1548 from Methanocaldococcus jannaschii (strain ATCC 43067 / DSM 2661 / JAL-1 / JCM 10045 / NBRC 100440) (Methanococcus jannaschii).